Reading from the N-terminus, the 810-residue chain is Phenylalanine--tRNA ligase beta subunit (810 aa).

In terms of domain architecture, tRNA-binding spans 39–150 (RSWAAGVVLG…LDLPSGSPVG (112 aa)). One can recognise a B5 domain in the interval 407 to 495 (RGEAIINLRL…RLYGYDHFCE (89 aa)). 4 residues coordinate Mg(2+): Asp473, Asp479, Glu482, and Glu483. Positions 716–809 (SPYPAVARDL…LTKQFAVSLR (94 aa)) constitute an FDX-ACB domain.

The protein belongs to the phenylalanyl-tRNA synthetase beta subunit family. Type 1 subfamily. As to quaternary structure, tetramer of two alpha and two beta subunits. Requires Mg(2+) as cofactor.

Its subcellular location is the cytoplasm. It carries out the reaction tRNA(Phe) + L-phenylalanine + ATP = L-phenylalanyl-tRNA(Phe) + AMP + diphosphate + H(+). The protein is Phenylalanine--tRNA ligase beta subunit (pheT) of Synechocystis sp. (strain ATCC 27184 / PCC 6803 / Kazusa).